Here is a 469-residue protein sequence, read N- to C-terminus: Ubiquitin carboxyl-terminal hydrolase MINDY-1 (469 aa).

Positions methionine 1–leucine 85 are disordered. The segment covering histidine 34 to alanine 53 has biased composition (basic and acidic residues). Position 103 is a phosphoserine (serine 103). Cysteine 137 (nucleophile) is an active-site residue. Residue histidine 319 is the Proton acceptor of the active site. The interval glutamine 388–glutamine 426 is ubiquitin-binding domain (UBD). The disordered stretch occupies residues glutamine 428–leucine 469. The residue at position 441 (serine 441) is a Phosphoserine. Positions alanine 453–leucine 469 are enriched in basic and acidic residues.

This sequence belongs to the MINDY deubiquitinase family. FAM63 subfamily.

The catalysed reaction is Thiol-dependent hydrolysis of ester, thioester, amide, peptide and isopeptide bonds formed by the C-terminal Gly of ubiquitin (a 76-residue protein attached to proteins as an intracellular targeting signal).. Functionally, hydrolase that can specifically remove 'Lys-48'-linked conjugated ubiquitin from proteins. Has exodeubiquitinase activity and has a preference for long polyubiquitin chains. May play a regulatory role at the level of protein turnover. The polypeptide is Ubiquitin carboxyl-terminal hydrolase MINDY-1 (MINDY1) (Pongo abelii (Sumatran orangutan)).